Reading from the N-terminus, the 449-residue chain is Required for meiotic nuclear division protein 1 homolog (449 aa).

Residues 1-16 (MPATLLRAVAGSHRVL) constitute a mitochondrion transit peptide.

This sequence belongs to the RMD1/sif2 family. In terms of assembly, homooligomer.

Its subcellular location is the mitochondrion. Functionally, required for mitochondrial translation, possibly by coordinating the assembly or maintenance of the mitochondrial ribosome. This chain is Required for meiotic nuclear division protein 1 homolog (RMND1), found in Pongo abelii (Sumatran orangutan).